The sequence spans 216 residues: Large ribosomal subunit protein uL3 (216 aa).

The disordered stretch occupies residues 132–157 (FRGQGASHGTQAVHRKPGSIGGCATP).

The protein belongs to the universal ribosomal protein uL3 family. Part of the 50S ribosomal subunit. Forms a cluster with proteins L14 and L19.

Its function is as follows. One of the primary rRNA binding proteins, it binds directly near the 3'-end of the 23S rRNA, where it nucleates assembly of the 50S subunit. This Saccharopolyspora erythraea (strain ATCC 11635 / DSM 40517 / JCM 4748 / NBRC 13426 / NCIMB 8594 / NRRL 2338) protein is Large ribosomal subunit protein uL3.